The chain runs to 490 residues: Bifunctional protein HldE (490 aa).

Positions 1-330 are ribokinase; sequence MFSFDALLQA…RRILPHASLA (330 aa). 205–208 contributes to the ATP binding site; that stretch reads NRKE. Residue D275 is part of the active site. Residues 358-490 are cytidylyltransferase; it reads FTNGCFDILH…LVARAREGQS (133 aa).

The protein in the N-terminal section; belongs to the carbohydrate kinase PfkB family. It in the C-terminal section; belongs to the cytidylyltransferase family. In terms of assembly, homodimer.

The catalysed reaction is D-glycero-beta-D-manno-heptose 7-phosphate + ATP = D-glycero-beta-D-manno-heptose 1,7-bisphosphate + ADP + H(+). It carries out the reaction D-glycero-beta-D-manno-heptose 1-phosphate + ATP + H(+) = ADP-D-glycero-beta-D-manno-heptose + diphosphate. It participates in nucleotide-sugar biosynthesis; ADP-L-glycero-beta-D-manno-heptose biosynthesis; ADP-L-glycero-beta-D-manno-heptose from D-glycero-beta-D-manno-heptose 7-phosphate: step 1/4. Its pathway is nucleotide-sugar biosynthesis; ADP-L-glycero-beta-D-manno-heptose biosynthesis; ADP-L-glycero-beta-D-manno-heptose from D-glycero-beta-D-manno-heptose 7-phosphate: step 3/4. In terms of biological role, catalyzes the phosphorylation of D-glycero-D-manno-heptose 7-phosphate at the C-1 position to selectively form D-glycero-beta-D-manno-heptose-1,7-bisphosphate. Catalyzes the ADP transfer from ATP to D-glycero-beta-D-manno-heptose 1-phosphate, yielding ADP-D-glycero-beta-D-manno-heptose. This is Bifunctional protein HldE from Rhodopseudomonas palustris (strain ATCC BAA-98 / CGA009).